A 419-amino-acid polypeptide reads, in one-letter code: L-rhamnose isomerase (419 aa).

Positions 262, 294, and 296 each coordinate Mn(2+).

It belongs to the rhamnose isomerase family. As to quaternary structure, homotetramer. It depends on Mn(2+) as a cofactor.

Its subcellular location is the cytoplasm. It catalyses the reaction L-rhamnopyranose = L-rhamnulose. Its pathway is carbohydrate degradation; L-rhamnose degradation; glycerone phosphate from L-rhamnose: step 1/3. Functionally, catalyzes the interconversion of L-rhamnose and L-rhamnulose. The protein is L-rhamnose isomerase of Salmonella agona (strain SL483).